The sequence spans 753 residues: Ion-translocating oxidoreductase complex subunit C (753 aa).

4Fe-4S ferredoxin-type domains lie at 367-397 (EMGE…QQLY) and 407-436 (KATA…VQYF). C377, C380, C383, C387, C416, C419, C422, and C426 together coordinate [4Fe-4S] cluster. 4 disordered regions span residues 517–561 (AKPD…RKAA), 606–625 (RKAE…PVDP), 640–659 (RKAE…PVDP), and 705–735 (AKAR…AVAA). Residues 526-537 (AAREARKAEARA) are compositionally biased toward basic and acidic residues. Low complexity-rich tracts occupy residues 610 to 622 (QQVA…VAEP), 644 to 656 (QQVA…VAEP), and 712 to 735 (QQAA…AVAA).

Belongs to the 4Fe4S bacterial-type ferredoxin family. RnfC subfamily. The complex is composed of six subunits: RnfA, RnfB, RnfC, RnfD, RnfE and RnfG. The cofactor is [4Fe-4S] cluster.

The protein resides in the cell inner membrane. In terms of biological role, part of a membrane-bound complex that couples electron transfer with translocation of ions across the membrane. The polypeptide is Ion-translocating oxidoreductase complex subunit C (Klebsiella pneumoniae (strain 342)).